We begin with the raw amino-acid sequence, 775 residues long: Serine/threonine-protein kinase-like protein CCR1 (775 aa).

An N-terminal signal peptide occupies residues 1-23 (METRCSLLFLSLILLYLPKPGSG). Topologically, residues 24–439 (FGSSGPIAAS…DKHWHQLQRL (416 aa)) are extracellular. 10 N-linked (GlcNAc...) asparagine glycosylation sites follow: N57, N102, N167, N213, N220, N241, N261, N292, N328, and N360. The stretch at 351-406 (PCNEKEFAFNASILNEPDLTSLCVRKELMVCSPCGSDCSHGFFLSSSCTANSDRIC) is one TNFR-Cys repeat. 3 disulfides stabilise this stretch: C352/C381, C384/C398, and C388/C406. N414 carries N-linked (GlcNAc...) asparagine glycosylation. A helical transmembrane segment spans residues 440–460 (VLIIGSCASALLIIIIGCCVV). The Cytoplasmic portion of the chain corresponds to 461–775 (PRIVTSPNKE…EHVARDALIF (315 aa)). Residues 520-770 (FKEFNELGRG…LANWLEHVAR (251 aa)) enclose the Protein kinase domain. Residues 526-534 (LGRGSYGFV) and K548 each bind ATP. D645 (proton acceptor) is an active-site residue.

This sequence belongs to the protein kinase superfamily. Ser/Thr protein kinase family. In terms of assembly, homodimer. As to expression, expressed in roots, leaves, shoot apical meristems (SAM), and floral buds.

Its subcellular location is the membrane. It catalyses the reaction L-seryl-[protein] + ATP = O-phospho-L-seryl-[protein] + ADP + H(+). The enzyme catalyses L-threonyl-[protein] + ATP = O-phospho-L-threonyl-[protein] + ADP + H(+). Its function is as follows. Serine/threonine-protein kinase with low activity. This Arabidopsis thaliana (Mouse-ear cress) protein is Serine/threonine-protein kinase-like protein CCR1 (CCR1).